Reading from the N-terminus, the 234-residue chain is Thymidine kinase, cytosolic (234 aa).

A Phosphoserine modification is found at S13. ATP contacts are provided by residues 26–33 (GPMFSGKS), 58–60 (DTR), and 97–100 (DEGQ). E98 (proton acceptor) is an active-site residue. Substrate is bound at residue F128. Zn(2+) is bound by residues C153 and C156. Substrate contacts are provided by residues 172 to 176 (VEVIG) and Y181. Zn(2+) is bound by residues C185 and C188. The KEN box signature appears at 203-205 (KEN).

The protein belongs to the thymidine kinase family. As to quaternary structure, homotetramer. Tetramerization from dimerization is induced by ATP and increases catalytic efficiency due to a high affinity for thymidine. Tetramerization is inhibited by phosphorylation at Ser-13. Interacts (via the KEN box) with FZR1. Post-translationally, phosphorylated on Ser-13 in mitosis. Phosphorylation of Ser-13 by CDK1 during mitosis reduces homotetramerization and catalytic efficiency when DNA replication is complete and intracellular TK1 is still present at a high level. Polyubiquitinated. Postmitosis, ubiquitination leads to proteasomal degradation. The KEN box sequence located at the C-terminal region targets for degradation by the anaphase promoting complex (APC/C) activated and rate-limited by FZR1.

It is found in the cytoplasm. It catalyses the reaction thymidine + ATP = dTMP + ADP + H(+). In terms of biological role, cell-cycle-regulated enzyme of importance in nucleotide metabolism. Catalyzes the first enzymatic step in the salvage pathway converting thymidine into thymidine monophosphate. Transcriptional regulation limits expression to the S phase of the cell cycle and transient expression coincides with the oscillation in the intracellular dTTP concentration. This Cricetulus griseus (Chinese hamster) protein is Thymidine kinase, cytosolic (TK1).